Consider the following 218-residue polypeptide: Non-structural protein NS3 (218 aa).

Belongs to the orbivirus NS3 family.

In terms of biological role, may play a role in the release of virions from infected cells. This is Non-structural protein NS3 (Segment-10) from Camelus dromedarius (Dromedary).